Here is a 307-residue protein sequence, read N- to C-terminus: Ribosomal RNA small subunit methyltransferase H (307 aa).

S-adenosyl-L-methionine contacts are provided by residues 32–34 (AGH), Asp-51, Ile-82, Asp-99, and Gln-106.

It belongs to the methyltransferase superfamily. RsmH family.

The protein localises to the cytoplasm. The enzyme catalyses cytidine(1402) in 16S rRNA + S-adenosyl-L-methionine = N(4)-methylcytidine(1402) in 16S rRNA + S-adenosyl-L-homocysteine + H(+). Its function is as follows. Specifically methylates the N4 position of cytidine in position 1402 (C1402) of 16S rRNA. The sequence is that of Ribosomal RNA small subunit methyltransferase H from Campylobacter concisus (strain 13826).